Here is a 483-residue protein sequence, read N- to C-terminus: UDP-N-acetylmuramoyl-L-alanyl-D-glutamate--2,6-diaminopimelate ligase (483 aa).

Serine 30 is a UDP-N-acetyl-alpha-D-muramoyl-L-alanyl-D-glutamate binding site. An ATP-binding site is contributed by glycine 109 to threonine 115. Residues threonine 151–threonine 152, serine 178, and arginine 186 contribute to the UDP-N-acetyl-alpha-D-muramoyl-L-alanyl-D-glutamate site. Lysine 218 is subject to N6-carboxylysine. Meso-2,6-diaminopimelate contacts are provided by residues arginine 380, aspartate 403–arginine 406, glycine 453, and glutamate 457. A Meso-diaminopimelate recognition motif motif is present at residues aspartate 403–arginine 406.

The protein belongs to the MurCDEF family. MurE subfamily. The cofactor is Mg(2+). Post-translationally, carboxylation is probably crucial for Mg(2+) binding and, consequently, for the gamma-phosphate positioning of ATP.

It localises to the cytoplasm. The catalysed reaction is UDP-N-acetyl-alpha-D-muramoyl-L-alanyl-D-glutamate + meso-2,6-diaminopimelate + ATP = UDP-N-acetyl-alpha-D-muramoyl-L-alanyl-gamma-D-glutamyl-meso-2,6-diaminopimelate + ADP + phosphate + H(+). Its pathway is cell wall biogenesis; peptidoglycan biosynthesis. Functionally, catalyzes the addition of meso-diaminopimelic acid to the nucleotide precursor UDP-N-acetylmuramoyl-L-alanyl-D-glutamate (UMAG) in the biosynthesis of bacterial cell-wall peptidoglycan. In Chlamydia trachomatis serovar A (strain ATCC VR-571B / DSM 19440 / HAR-13), this protein is UDP-N-acetylmuramoyl-L-alanyl-D-glutamate--2,6-diaminopimelate ligase.